The sequence spans 453 residues: Exopolyphosphatase PRUNE1 (453 aa).

An N-acetylmethionine modification is found at Met1. Positions 28, 30, 106, and 179 each coordinate Mn(2+). The DHH motif motif lies at 106–108 (DHH). The interval 393-420 (SLISGLSQDEEDPPLPPTPMNSLVDECP) is essential for homodimerization. The interval 395 to 421 (ISGLSQDEEDPPLPPTPMNSLVDECPL) is disordered. The residue at position 399 (Ser399) is a Phosphoserine. Thr410 carries the post-translational modification Phosphothreonine. The residue at position 414 (Ser414) is a Phosphoserine.

The protein belongs to the PPase class C family. Prune subfamily. Homooligomer. Able to homodimerize via its C-terminal domain. Interacts with NME1. Interacts with GSK3; at focal adhesion complexes where paxillin and vinculin are colocalized. Interacts with alpha and beta tubulin. It depends on Mn(2+) as a cofactor. Ubiquitously expressed. Seems to be overexpressed in aggressive sarcoma subtypes, such as leiomyosarcomas and malignant fibrous histiocytomas (MFH) as well as in the less malignant liposarcomas.

It is found in the cytoplasm. It localises to the nucleus. The protein resides in the cell junction. The protein localises to the focal adhesion. The catalysed reaction is diphosphate + H2O = 2 phosphate + H(+). With respect to regulation, activated by magnesium ions and inhibited by manganese ions. Inhibited by dipyridamole, moderately sensitive to IBMX and inhibited by vinpocetine. Phosphodiesterase (PDE) that has higher activity toward cAMP than cGMP, as substrate. Plays a role in cell proliferation, migration and differentiation, and acts as a negative regulator of NME1. Plays a role in the regulation of neurogenesis. Involved in the regulation of microtubule polymerization. The sequence is that of Exopolyphosphatase PRUNE1 from Homo sapiens (Human).